Here is a 128-residue protein sequence, read N- to C-terminus: Large-conductance mechanosensitive channel (128 aa).

The next 2 membrane-spanning stretches (helical) occupy residues 11-31 (FALKGNVLDLAVAVVIGAAFG) and 70-90 (GAFIQSIVDFVIIAFAIFIFV).

Belongs to the MscL family. In terms of assembly, homopentamer.

Its subcellular location is the cell membrane. Functionally, channel that opens in response to stretch forces in the membrane lipid bilayer. May participate in the regulation of osmotic pressure changes within the cell. This is Large-conductance mechanosensitive channel from Listeria monocytogenes serotype 4b (strain CLIP80459).